Here is a 461-residue protein sequence, read N- to C-terminus: Glutamate-gated chloride channel alpha (461 aa).

Residues 1-20 (MATWIVGKLIIASLILGIQA) form the signal peptide. The Extracellular segment spans residues 21-275 (QQARTKSQDI…TTIQLKREFS (255 aa)). 3 residues coordinate L-glutamate: Arg-98, Arg-117, and Ser-182. Cys-191 and Cys-205 are disulfide-bonded. Ser-211 lines the L-glutamate pocket. N-linked (GlcNAc...) asparagine glycosylation is present at Asn-246. Residues Cys-252 and Cys-263 are joined by a disulfide bond. Residues 276–298 (FYLLQLYIPSCMLVIVSWVSFWF) form a helical membrane-spanning segment. At 299 to 303 (DRTAI) the chain is on the cytoplasmic side. A helical membrane pass occupies residues 304–325 (PARVTLGVTTLLTMTAQSAGIN). Topologically, residues 326–332 (SQLPPVS) are extracellular. The helical transmembrane segment at 333-353 (YIKAIDVWIGACMTFIFCALL) threads the bilayer. Residues 354-432 (EFALVNHIAN…EWNDISKRVD (79 aa)) lie on the Cytoplasmic side of the membrane. Residues 433–454 (LISRALFPVLFFVFNILYWSRF) traverse the membrane as a helical segment. The Extracellular segment spans residues 455–461 (GQQNVLF).

The protein belongs to the ligand-gated ion channel (TC 1.A.9) family. Glutamate-gated chloride channel (TC 1.A.9.4) subfamily. Pentamer. Homooligomer, forms functional heterooligomers with glc-2.

The protein localises to the postsynaptic cell membrane. The protein resides in the cell membrane. Its function is as follows. Glutamate-gated chloride channel subunit; channel properties depend on the subunit composition. Glutamate binding triggers a rapidly reversible current in heteromeric channels formed by glc-1 and glc-2, while the anti-helmintic drug ivermectin and other avermectins trigger a permanently open channel configuration. Channels containing only glc-1 are activated by ivermectin, but not by glutamate alone (in vitro). The heteromeric channel formed by glc-1 and glc-2 is also activated by ibotenate, and it is blocked by picrotoxin and flufenamic acid. Plays a role in the regulation of locomotor behavior. The polypeptide is Glutamate-gated chloride channel alpha (Caenorhabditis elegans).